Here is a 721-residue protein sequence, read N- to C-terminus: 1,4-alpha-glucan branching enzyme GlgB (721 aa).

Asp400 functions as the Nucleophile in the catalytic mechanism. The Proton donor role is filled by Glu453.

This sequence belongs to the glycosyl hydrolase 13 family. GlgB subfamily. Monomer.

The enzyme catalyses Transfers a segment of a (1-&gt;4)-alpha-D-glucan chain to a primary hydroxy group in a similar glucan chain.. Its pathway is glycan biosynthesis; glycogen biosynthesis. Functionally, catalyzes the formation of the alpha-1,6-glucosidic linkages in glycogen by scission of a 1,4-alpha-linked oligosaccharide from growing alpha-1,4-glucan chains and the subsequent attachment of the oligosaccharide to the alpha-1,6 position. In Chlamydia felis (strain Fe/C-56) (Chlamydophila felis), this protein is 1,4-alpha-glucan branching enzyme GlgB.